The chain runs to 178 residues: Large ribosomal subunit protein uL6 (178 aa).

It belongs to the universal ribosomal protein uL6 family. As to quaternary structure, part of the 50S ribosomal subunit.

Functionally, this protein binds to the 23S rRNA, and is important in its secondary structure. It is located near the subunit interface in the base of the L7/L12 stalk, and near the tRNA binding site of the peptidyltransferase center. This chain is Large ribosomal subunit protein uL6, found in Corynebacterium diphtheriae (strain ATCC 700971 / NCTC 13129 / Biotype gravis).